The following is a 584-amino-acid chain: Interferon regulatory factor 2-binding protein 1 (584 aa).

The tract at residues 60 to 127 (VLPEGRSPGP…SGRLPLPSPA (68 aa)) is disordered. A phosphoserine mark is found at serine 66 and serine 125. Omega-N-methylarginine is present on arginine 177. Serine 186 bears the Phosphoserine mark. Residues 197–217 (EKEKQQRNADCLAELNEAMRG) are a coiled coil. Lysine 227 is covalently cross-linked (Glycyl lysine isopeptide (Lys-Gly) (interchain with G-Cter in SUMO2)). The interval 346–420 (PAEALPQQYP…PYSAETPGVP (75 aa)) is disordered. Positions 354–369 (YPEPAPAALCGPPPRA) are enriched in pro residues. 4 positions are modified to phosphoserine: serine 371, serine 384, serine 421, and serine 436. The segment at 433 to 495 (LGHSPKDPGG…VSGGGSGTGA (63 aa)) is disordered. A Glycyl lysine isopeptide (Lys-Gly) (interchain with G-Cter in SUMO2) cross-link involves residue lysine 438. Residues 449 to 463 (AGGASPAASSTAQPP) show a composition bias toward low complexity. Residues serine 453 and serine 457 each carry the phosphoserine modification. The RING-type; degenerate zinc finger occupies 503–550 (CTLCRERLEDTHFVQCPSVPGHKFCFPCSREFIKAQGPAGEVYCPSGD). The interval 503-550 (CTLCRERLEDTHFVQCPSVPGHKFCFPCSREFIKAQGPAGEVYCPSGD) is cys-rich.

The protein belongs to the IRF2BP family. As to quaternary structure, interacts with IRF2. Part of a corepressor complex containing IRF2 and IRF2BP2. Interacts with JDP2.

Its subcellular location is the nucleus. The catalysed reaction is S-ubiquitinyl-[E2 ubiquitin-conjugating enzyme]-L-cysteine + [acceptor protein]-L-lysine = [E2 ubiquitin-conjugating enzyme]-L-cysteine + N(6)-ubiquitinyl-[acceptor protein]-L-lysine.. Its function is as follows. Acts as a transcriptional corepressor in a IRF2-dependent manner; this repression is not mediated by histone deacetylase activities. May act as an E3 ligase towards JDP2, enhancing its polyubiquitination. Represses ATF2-dependent transcriptional activation. This Homo sapiens (Human) protein is Interferon regulatory factor 2-binding protein 1 (IRF2BP1).